The following is a 91-amino-acid chain: Small ribosomal subunit protein uS19 (91 aa).

It belongs to the universal ribosomal protein uS19 family.

Its function is as follows. Protein S19 forms a complex with S13 that binds strongly to the 16S ribosomal RNA. The chain is Small ribosomal subunit protein uS19 from Psychrobacter sp. (strain PRwf-1).